Consider the following 398-residue polypeptide: 1-deoxy-D-xylulose 5-phosphate reductoisomerase (398 aa).

The NADPH site is built by Thr11, Gly12, Ser13, Ile14, Arg38, Asn39, and Asn125. Residue Lys126 coordinates 1-deoxy-D-xylulose 5-phosphate. Position 127 (Glu127) interacts with NADPH. Asp151 contributes to the Mn(2+) binding site. Residues Ser152, Glu153, Ser179, and His202 each coordinate 1-deoxy-D-xylulose 5-phosphate. Glu153 contributes to the Mn(2+) binding site. Gly208 serves as a coordination point for NADPH. 1-deoxy-D-xylulose 5-phosphate-binding residues include Ser215, Asn220, Lys221, and Glu224. Mn(2+) is bound at residue Glu224.

This sequence belongs to the DXR family. Mg(2+) is required as a cofactor. The cofactor is Mn(2+).

The catalysed reaction is 2-C-methyl-D-erythritol 4-phosphate + NADP(+) = 1-deoxy-D-xylulose 5-phosphate + NADPH + H(+). It functions in the pathway isoprenoid biosynthesis; isopentenyl diphosphate biosynthesis via DXP pathway; isopentenyl diphosphate from 1-deoxy-D-xylulose 5-phosphate: step 1/6. In terms of biological role, catalyzes the NADPH-dependent rearrangement and reduction of 1-deoxy-D-xylulose-5-phosphate (DXP) to 2-C-methyl-D-erythritol 4-phosphate (MEP). The chain is 1-deoxy-D-xylulose 5-phosphate reductoisomerase from Burkholderia lata (strain ATCC 17760 / DSM 23089 / LMG 22485 / NCIMB 9086 / R18194 / 383).